Reading from the N-terminus, the 76-residue chain is Omega/Kappa-hexatoxin-Hv1h (76 aa).

An N-terminal signal peptide occupies residues 1-22; that stretch reads MNTATGFIVLLVLATILGGIEA. Positions 23 to 35 are excised as a propeptide; it reads GESHMRKDAMGRV. Cystine bridges form between Cys-40-Cys-55, Cys-47-Cys-60, and Cys-54-Cys-74.

The protein belongs to the neurotoxin 08 (Shiva) family. 02 (omega/kappa toxin) subfamily. As to expression, expressed by the venom gland.

The protein localises to the secreted. Functionally, toxin that may inhibit ion channels. This is Omega/Kappa-hexatoxin-Hv1h from Hadronyche versuta (Blue mountains funnel-web spider).